The sequence spans 255 residues: Phosphatidylglycerol--prolipoprotein diacylglyceryl transferase (255 aa).

Helical transmembrane passes span 15–35, 46–66, and 84–104; these read WYGI…NLNC, IDVF…YYVV, and LGGL…YIVS. Arg130 lines the a 1,2-diacyl-sn-glycero-3-phospho-(1'-sn-glycerol) pocket. Helical transmembrane passes span 169-189, 196-216, and 228-248; these read PTFL…VYIF, GTVI…IEGL, and VAQL…VYLK.

Belongs to the Lgt family.

The protein localises to the cell membrane. The enzyme catalyses L-cysteinyl-[prolipoprotein] + a 1,2-diacyl-sn-glycero-3-phospho-(1'-sn-glycerol) = an S-1,2-diacyl-sn-glyceryl-L-cysteinyl-[prolipoprotein] + sn-glycerol 1-phosphate + H(+). The protein operates within protein modification; lipoprotein biosynthesis (diacylglyceryl transfer). Catalyzes the transfer of the diacylglyceryl group from phosphatidylglycerol to the sulfhydryl group of the N-terminal cysteine of a prolipoprotein, the first step in the formation of mature lipoproteins. The polypeptide is Phosphatidylglycerol--prolipoprotein diacylglyceryl transferase (Clostridium kluyveri (strain NBRC 12016)).